The following is a 262-amino-acid chain: Pimeloyl-[acyl-carrier protein] methyl ester esterase (262 aa).

One can recognise an AB hydrolase-1 domain in the interval 15-242; that stretch reads HLVLLHGWGL…AAHAPFISHP (228 aa). Substrate contacts are provided by residues Trp-22, 82–83, and 143–147; these read SL and FLALQ. The active-site Nucleophile is the Ser-82. Residues Asp-207 and His-235 contribute to the active site. His-235 is a substrate binding site.

The protein belongs to the AB hydrolase superfamily. Carboxylesterase BioH family. In terms of assembly, monomer.

The protein localises to the cytoplasm. It catalyses the reaction 6-carboxyhexanoyl-[ACP] methyl ester + H2O = 6-carboxyhexanoyl-[ACP] + methanol + H(+). Its pathway is cofactor biosynthesis; biotin biosynthesis. The physiological role of BioH is to remove the methyl group introduced by BioC when the pimeloyl moiety is complete. It allows to synthesize pimeloyl-ACP via the fatty acid synthetic pathway through the hydrolysis of the ester bonds of pimeloyl-ACP esters. The protein is Pimeloyl-[acyl-carrier protein] methyl ester esterase of Shigella flexneri.